Consider the following 400-residue polypeptide: Phosphoglycerate kinase (400 aa).

Residues 22–24 (DFN), Arg-38, 61–64 (HLGR), Arg-119, and Arg-152 contribute to the substrate site. ATP-binding positions include Lys-205, Gly-296, Glu-327, and 353–356 (GGDT).

This sequence belongs to the phosphoglycerate kinase family. In terms of assembly, monomer.

Its subcellular location is the cytoplasm. It carries out the reaction (2R)-3-phosphoglycerate + ATP = (2R)-3-phospho-glyceroyl phosphate + ADP. It functions in the pathway carbohydrate degradation; glycolysis; pyruvate from D-glyceraldehyde 3-phosphate: step 2/5. The polypeptide is Phosphoglycerate kinase (Campylobacter jejuni subsp. jejuni serotype O:6 (strain 81116 / NCTC 11828)).